The sequence spans 235 residues: Pyridoxine 5'-phosphate synthase (235 aa).

Residue asparagine 7 coordinates 3-amino-2-oxopropyl phosphate. Residue 9 to 10 coordinates 1-deoxy-D-xylulose 5-phosphate; it reads DH. Position 18 (arginine 18) interacts with 3-amino-2-oxopropyl phosphate. Histidine 43 (proton acceptor) is an active-site residue. 1-deoxy-D-xylulose 5-phosphate-binding residues include arginine 45 and histidine 50. Glutamate 70 functions as the Proton acceptor in the catalytic mechanism. 1-deoxy-D-xylulose 5-phosphate is bound at residue threonine 100. The active-site Proton donor is the histidine 187. 3-amino-2-oxopropyl phosphate-binding positions include glycine 188 and 209 to 210; that span reads GH.

It belongs to the PNP synthase family. As to quaternary structure, homooctamer; tetramer of dimers.

The protein localises to the cytoplasm. The catalysed reaction is 3-amino-2-oxopropyl phosphate + 1-deoxy-D-xylulose 5-phosphate = pyridoxine 5'-phosphate + phosphate + 2 H2O + H(+). Its pathway is cofactor biosynthesis; pyridoxine 5'-phosphate biosynthesis; pyridoxine 5'-phosphate from D-erythrose 4-phosphate: step 5/5. Its function is as follows. Catalyzes the complicated ring closure reaction between the two acyclic compounds 1-deoxy-D-xylulose-5-phosphate (DXP) and 3-amino-2-oxopropyl phosphate (1-amino-acetone-3-phosphate or AAP) to form pyridoxine 5'-phosphate (PNP) and inorganic phosphate. The sequence is that of Pyridoxine 5'-phosphate synthase from Desulfatibacillum aliphaticivorans.